A 217-amino-acid chain; its full sequence is Large ribosomal subunit protein uL3 (217 aa).

Over residues G134–V146 the composition is skewed to polar residues. The segment at G134–Q154 is disordered. The residue at position 154 (Q154) is an N5-methylglutamine.

It belongs to the universal ribosomal protein uL3 family. Part of the 50S ribosomal subunit. Forms a cluster with proteins L14 and L19. Post-translationally, methylated by PrmB.

Its function is as follows. One of the primary rRNA binding proteins, it binds directly near the 3'-end of the 23S rRNA, where it nucleates assembly of the 50S subunit. The protein is Large ribosomal subunit protein uL3 of Burkholderia cenocepacia (strain HI2424).